A 351-amino-acid polypeptide reads, in one-letter code: Small ribosomal subunit biogenesis GTPase RsgA (351 aa).

Residues methionine 1–arginine 12 show a composition bias toward basic residues. The disordered stretch occupies residues methionine 1–glycine 37. Residues arginine 13–methionine 31 show a composition bias toward basic and acidic residues. Residues tyrosine 112–phenylalanine 274 form the CP-type G domain. GTP-binding positions include asparagine 160–aspartate 163 and glycine 214–serine 222. Residues cysteine 298, cysteine 303, histidine 305, and cysteine 311 each contribute to the Zn(2+) site.

The protein belongs to the TRAFAC class YlqF/YawG GTPase family. RsgA subfamily. As to quaternary structure, monomer. Associates with 30S ribosomal subunit, binds 16S rRNA. Requires Zn(2+) as cofactor.

It is found in the cytoplasm. One of several proteins that assist in the late maturation steps of the functional core of the 30S ribosomal subunit. Helps release RbfA from mature subunits. May play a role in the assembly of ribosomal proteins into the subunit. Circularly permuted GTPase that catalyzes slow GTP hydrolysis, GTPase activity is stimulated by the 30S ribosomal subunit. The protein is Small ribosomal subunit biogenesis GTPase RsgA of Photorhabdus laumondii subsp. laumondii (strain DSM 15139 / CIP 105565 / TT01) (Photorhabdus luminescens subsp. laumondii).